The sequence spans 345 residues: MIKVGIVGGTGYTGVELLRILATHPEAEVICITSRSEAGMPVADMYPNLRGHYELEFSEPDASVLASCDLVFFATPHGVAMRMVPELMASGVRVVDLSADFRLKDLDTWANWYGMPHESADWAEKAVYGLPEVARDAIRDAQLVANPGCYPTAVQLGFLPLLEQGLVNPARLIADAKSGASGAGRQGKIGMLHGEIGESFKAYGASGHRHLPEIRQGLTAAAGKGVGVTFVPHLIPMIRGIEATLYAELDNPQDFDRLQALYEARYKDEPFVDVMPFGSHPETRSVRGANHCRMALHRQEDSNIVIVSSVIDNLVKGAAGQAVQNMNIMFSLDETMGLNAPALLP.

The active site involves cysteine 149.

Belongs to the NAGSA dehydrogenase family. Type 1 subfamily.

Its subcellular location is the cytoplasm. The catalysed reaction is N-acetyl-L-glutamate 5-semialdehyde + phosphate + NADP(+) = N-acetyl-L-glutamyl 5-phosphate + NADPH + H(+). It functions in the pathway amino-acid biosynthesis; L-arginine biosynthesis; N(2)-acetyl-L-ornithine from L-glutamate: step 3/4. In terms of biological role, catalyzes the NADPH-dependent reduction of N-acetyl-5-glutamyl phosphate to yield N-acetyl-L-glutamate 5-semialdehyde. This chain is N-acetyl-gamma-glutamyl-phosphate reductase, found in Marinobacter nauticus (strain ATCC 700491 / DSM 11845 / VT8) (Marinobacter aquaeolei).